A 348-amino-acid chain; its full sequence is Ion-translocating oxidoreductase complex subunit D (348 aa).

5 helical membrane passes run Phe-19–Gly-39, Gly-41–Ala-61, Lys-66–Met-86, Ala-87–Leu-107, and Pro-122–Leu-142. The residue at position 186 (Thr-186) is an FMN phosphoryl threonine. Transmembrane regions (helical) follow at residues Ile-212 to Leu-232, Ile-236 to Thr-256, Leu-265 to Thr-285, Ser-291 to Ile-311, and Gly-315 to Ile-335.

Belongs to the NqrB/RnfD family. In terms of assembly, the complex is composed of six subunits: RnfA, RnfB, RnfC, RnfD, RnfE and RnfG. Requires FMN as cofactor.

Its subcellular location is the cell inner membrane. Part of a membrane-bound complex that couples electron transfer with translocation of ions across the membrane. This chain is Ion-translocating oxidoreductase complex subunit D, found in Haemophilus ducreyi (strain 35000HP / ATCC 700724).